Reading from the N-terminus, the 301-residue chain is uncharacterized protein (301 aa).

Positions lysine 45–leucine 286 constitute a Radical SAM core domain.

This is an uncharacterized protein from Acidianus two-tailed virus (ATV).